The primary structure comprises 991 residues: UvrABC system protein A (991 aa).

Residue 48 to 55 coordinates ATP; sequence GLSGSGKS. 2 ABC transporter domains span residues 345-624 and 644-972; these read WAKS…PKSL and NHRR…KFLE. Residue 676–683 coordinates ATP; sequence GVSGGGKS. Residues 775-801 form a C4-type zinc finger; sequence CEACQGDGVIKIEMHFLPDVYVTCDVC.

This sequence belongs to the ABC transporter superfamily. UvrA family. As to quaternary structure, forms a heterotetramer with UvrB during the search for lesions.

The protein localises to the cytoplasm. Functionally, the UvrABC repair system catalyzes the recognition and processing of DNA lesions. UvrA is an ATPase and a DNA-binding protein. A damage recognition complex composed of 2 UvrA and 2 UvrB subunits scans DNA for abnormalities. When the presence of a lesion has been verified by UvrB, the UvrA molecules dissociate. The sequence is that of UvrABC system protein A from Bradyrhizobium diazoefficiens (strain JCM 10833 / BCRC 13528 / IAM 13628 / NBRC 14792 / USDA 110).